Consider the following 185-residue polypeptide: Elongation factor P (185 aa).

The protein belongs to the elongation factor P family.

Its subcellular location is the cytoplasm. It functions in the pathway protein biosynthesis; polypeptide chain elongation. In terms of biological role, involved in peptide bond synthesis. Stimulates efficient translation and peptide-bond synthesis on native or reconstituted 70S ribosomes in vitro. Probably functions indirectly by altering the affinity of the ribosome for aminoacyl-tRNA, thus increasing their reactivity as acceptors for peptidyl transferase. This chain is Elongation factor P, found in Thermotoga petrophila (strain ATCC BAA-488 / DSM 13995 / JCM 10881 / RKU-1).